The sequence spans 1550 residues: Cellulose synthase 1 (1550 aa).

The interval 1–741 (MPEVRSSTQS…KERVLKGTVK (741 aa)) is catalytic. Transmembrane regions (helical) follow at residues 26 to 46 (GAGL…TSVT), 47 to 67 (LPPE…FIVG), and 106 to 126 (GLLG…LFLS). The tract at residues 147–240 (EWPTVDIFVP…YILIFDCDHV (94 aa)) is catalytic subdomain A. The active site involves Asp189. Substrate contacts are provided by Asp236 and Asp238. A catalytic subdomain B region spans residues 317-377 (TAIEQIGGFA…GQRVRWARGM (61 aa)). Residue Asp333 is part of the active site. 5 helical membrane passes run 398–418 (LCYL…IFLS), 423–443 (FLFF…AYAI), 468–488 (VYET…LLSP), 507–527 (FDLG…GGLA), and 547–567 (LLNS…IAVG). In terms of domain architecture, PilZ spans 572-647 (QKRNSHRIPA…PARIIRAGNG (76 aa)). Disordered stretches follow at residues 711 to 734 (SSPT…RKER) and 768 to 813 (APAH…QPLA). The tract at residues 742–1550 (MVSLLALLTF…KQLEDERRKS (809 aa)) is cyclic di-GMP binding domain. Residues 768-796 (APAHQPEASDLPPLPALLPATSGAAQAGA) are compositionally biased toward low complexity. A helical membrane pass occupies residues 1513–1533 (VLLVGLLGCILIVSVLARALA).

The protein in the N-terminal section; belongs to the glycosyltransferase 2 family. In the C-terminal section; belongs to the AcsB/BcsB family. Mg(2+) is required as a cofactor.

It localises to the cell inner membrane. The enzyme catalyses [(1-&gt;4)-beta-D-glucosyl](n) + UDP-alpha-D-glucose = [(1-&gt;4)-beta-D-glucosyl](n+1) + UDP + H(+). It functions in the pathway glycan metabolism; bacterial cellulose biosynthesis. With respect to regulation, activated by c-di-GMP. Its function is as follows. Bifunctional protein comprised of a catalytic subunit and a regulatory subunit. The catalytic subunit of cellulose synthase polymerizes uridine 5'-diphosphate glucose to cellulose in a processive way. The thick cellulosic mats generated by this enzyme probably provide a specialized protective environment to the bacterium. The regulatory subunit binds bis-(3'-5') cyclic diguanylic acid (c-di-GMP). The chain is Cellulose synthase 1 (acsAB) from Komagataeibacter xylinus (Gluconacetobacter xylinus).